The primary structure comprises 276 residues: Beta-lactamase OXA-1 (276 aa).

The N-terminal stretch at 1 to 25 (MKNTIHINFAIFLIIANIIYSSASA) is a signal peptide. Catalysis depends on Ser71, which acts as the Acyl-ester intermediate. 5 residues coordinate a beta-lactam: Ser71, Lys74, Ser118, Thr216, and Ala218. An N6-carboxylysine modification is found at Lys74.

It belongs to the class-D beta-lactamase family. In terms of assembly, monomer.

It localises to the periplasm. The enzyme catalyses a beta-lactam + H2O = a substituted beta-amino acid. With respect to regulation, inhibited by penicillin sulfones. Only weakly inhibited by clavulanic acid and sulbactam. Class D beta-lactamase which confers resistance to the beta-lactam antibiotics, including amoxicillin and ticarcillin. Acts via hydrolysis of the beta-lactam ring. Has penicillin- and cephalosporin-hydrolyzing activities. The protein is Beta-lactamase OXA-1 of Escherichia coli.